Here is a 246-residue protein sequence, read N- to C-terminus: Peptide methionine sulfoxide reductase (246 aa).

The Cysteine sulfenic acid (-SOH) intermediate role is filled by Cys48. The cysteines at positions 48 and 246 are disulfide-linked.

In terms of processing, conjugated to URM1, a ubiquitin-like protein.

It catalyses the reaction L-methionyl-[protein] + [thioredoxin]-disulfide + H2O = L-methionyl-(S)-S-oxide-[protein] + [thioredoxin]-dithiol. The enzyme catalyses [thioredoxin]-disulfide + L-methionine + H2O = L-methionine (S)-S-oxide + [thioredoxin]-dithiol. Has an important function as a repair enzyme for proteins that have been inactivated by oxidation. Catalyzes the reduction of methionine sulfoxide in proteins to methionine. Does not catalyze the reverse reaction involving the oxidation of methionine residues. This chain is Peptide methionine sulfoxide reductase, found in Drosophila melanogaster (Fruit fly).